The chain runs to 129 residues: MSGRGKQGGKVRAKAKSRSSRAGLQFPVGRVHRLLRKGNYAERVGAGAPVYLAAVLEYLTAEILELAGNAARDNKKTRIIPRHLQLAIRNDEELNKLLGRVTIAQGGVLPNIQAVLLPKKTESQKVKSK.

The interval 1–22 (MSGRGKQGGKVRAKAKSRSSRA) is disordered. 2 positions are modified to N6-acetyllysine: lysine 6 and lysine 10. A compositionally biased stretch (basic residues) spans 7–19 (QGGKVRAKAKSRS). Lysine 10 carries the N6-lactoyllysine; alternate modification. Position 105 is an N5-methylglutamine (glutamine 105). Threonine 121 is modified (phosphothreonine; by DCAF1).

It belongs to the histone H2A family. As to quaternary structure, the nucleosome is a histone octamer containing two molecules each of H2A, H2B, H3 and H4 assembled in one H3-H4 heterotetramer and two H2A-H2B heterodimers. The octamer wraps approximately 147 bp of DNA. Monoubiquitination of Lys-120 (H2AXK119ub) gives a specific tag for epigenetic transcriptional repression. Following DNA double-strand breaks (DSBs), it is ubiquitinated through 'Lys-63' linkage of ubiquitin moieties. Post-translationally, glutamine methylation at Gln-105 (H2AQ104me) by FBL is specifically dedicated to polymerase I. It is present at 35S ribosomal DNA locus and impairs binding of the FACT complex. In terms of processing, phosphorylation on Ser-2 (H2AS1ph) is enhanced during mitosis. Phosphorylation on Ser-2 by RPS6KA5/MSK1 directly represses transcription. Acetylation of H3 inhibits Ser-2 phosphorylation by RPS6KA5/MSK1. Phosphorylation at Thr-121 (H2AT120ph) by DCAF1 is present in the regulatory region of many tumor suppresor genes and down-regulates their transcription.

The protein localises to the nucleus. It localises to the chromosome. In terms of biological role, core component of nucleosome. Nucleosomes wrap and compact DNA into chromatin, limiting DNA accessibility to the cellular machineries which require DNA as a template. Histones thereby play a central role in transcription regulation, DNA repair, DNA replication and chromosomal stability. DNA accessibility is regulated via a complex set of post-translational modifications of histones, also called histone code, and nucleosome remodeling. The protein is Histone H2A.J of Mus musculus (Mouse).